A 239-amino-acid polypeptide reads, in one-letter code: tRNA (guanine-N(1)-)-methyltransferase (239 aa).

S-adenosyl-L-methionine contacts are provided by residues Gly-112 and 131-136 (LGDFIL).

This sequence belongs to the RNA methyltransferase TrmD family. Homodimer.

It localises to the cytoplasm. The enzyme catalyses guanosine(37) in tRNA + S-adenosyl-L-methionine = N(1)-methylguanosine(37) in tRNA + S-adenosyl-L-homocysteine + H(+). In terms of biological role, specifically methylates guanosine-37 in various tRNAs. This Clostridium tetani (strain Massachusetts / E88) protein is tRNA (guanine-N(1)-)-methyltransferase.